The primary structure comprises 379 residues: L-lactate dehydrogenase (379 aa).

The region spanning Met1–Pro379 is the FMN hydroxy acid dehydrogenase domain. Tyr24 is a binding site for substrate. Positions 106 and 127 each coordinate FMN. Residue Tyr129 participates in substrate binding. Thr155 contributes to the FMN binding site. Substrate is bound at residue Arg164. FMN is bound at residue Lys251. The Proton acceptor role is filled by His275. Arg278 lines the substrate pocket. Position 306-330 (Asp306–Arg330) interacts with FMN.

This sequence belongs to the FMN-dependent alpha-hydroxy acid dehydrogenase family. The cofactor is FMN.

It is found in the cell inner membrane. It catalyses the reaction (S)-lactate + A = pyruvate + AH2. Functionally, catalyzes the conversion of L-lactate to pyruvate. Is coupled to the respiratory chain. The sequence is that of L-lactate dehydrogenase from Stenotrophomonas maltophilia (strain R551-3).